The primary structure comprises 353 residues: Photosystem II D2 protein (353 aa).

An N-acetylthreonine modification is found at Thr-2. Thr-2 is modified (phosphothreonine). Residues 41-61 (CAYFALGGWFTGTTFVTSWYT) form a helical membrane-spanning segment. Residue His-118 participates in chlorophyll a binding. The helical transmembrane segment at 125 to 141 (GFMLRQFELARSVQLRP) threads the bilayer. Pheophytin a is bound by residues Gln-130 and Asn-143. A helical membrane pass occupies residues 153–166 (VFVSVFLIYPLGQS). His-198 is a binding site for chlorophyll a. The helical transmembrane segment at 208–228 (AALLCAIHGATVENTLFEDGD) threads the bilayer. A plastoquinone-binding residues include His-215 and Phe-262. His-215 serves as a coordination point for Fe cation. His-269 is a binding site for Fe cation. The chain crosses the membrane as a helical span at residues 279-295 (GLWMSALGVVGLALNLR).

Belongs to the reaction center PufL/M/PsbA/D family. In terms of assembly, PSII is composed of 1 copy each of membrane proteins PsbA, PsbB, PsbC, PsbD, PsbE, PsbF, PsbH, PsbI, PsbJ, PsbK, PsbL, PsbM, PsbT, PsbX, PsbY, PsbZ, Psb30/Ycf12, at least 3 peripheral proteins of the oxygen-evolving complex and a large number of cofactors. It forms dimeric complexes. Requires The D1/D2 heterodimer binds P680, chlorophylls that are the primary electron donor of PSII, and subsequent electron acceptors. It shares a non-heme iron and each subunit binds pheophytin, quinone, additional chlorophylls, carotenoids and lipids. There is also a Cl(-1) ion associated with D1 and D2, which is required for oxygen evolution. The PSII complex binds additional chlorophylls, carotenoids and specific lipids. as cofactor.

Its subcellular location is the plastid. The protein localises to the chloroplast thylakoid membrane. The catalysed reaction is 2 a plastoquinone + 4 hnu + 2 H2O = 2 a plastoquinol + O2. Functionally, photosystem II (PSII) is a light-driven water:plastoquinone oxidoreductase that uses light energy to abstract electrons from H(2)O, generating O(2) and a proton gradient subsequently used for ATP formation. It consists of a core antenna complex that captures photons, and an electron transfer chain that converts photonic excitation into a charge separation. The D1/D2 (PsbA/PsbD) reaction center heterodimer binds P680, the primary electron donor of PSII as well as several subsequent electron acceptors. D2 is needed for assembly of a stable PSII complex. The chain is Photosystem II D2 protein from Ceratophyllum demersum (Rigid hornwort).